A 373-amino-acid polypeptide reads, in one-letter code: Glutamate 5-kinase (373 aa).

ATP is bound at residue Lys15. Positions 54, 141, and 153 each coordinate substrate. ATP-binding positions include 173-174 and 215-221; these read SD and TGGMATK. A PUA domain is found at 280–358; sequence RGKLLVDEGA…SEIEVVLGYK (79 aa).

It belongs to the glutamate 5-kinase family.

It localises to the cytoplasm. The enzyme catalyses L-glutamate + ATP = L-glutamyl 5-phosphate + ADP. It participates in amino-acid biosynthesis; L-proline biosynthesis; L-glutamate 5-semialdehyde from L-glutamate: step 1/2. Its function is as follows. Catalyzes the transfer of a phosphate group to glutamate to form L-glutamate 5-phosphate. The polypeptide is Glutamate 5-kinase (Syntrophotalea carbinolica (strain DSM 2380 / NBRC 103641 / GraBd1) (Pelobacter carbinolicus)).